Consider the following 253-residue polypeptide: Chemokine-binding protein (253 aa).

A signal peptide spans 1–17 (MKQYIVLACMCLAAAAM). Residues 62–87 (TEITESESDPEVESEDDSTSVEDVDP) are disordered. A compositionally biased stretch (acidic residues) spans 65–86 (TESESDPEVESEDDSTSVEDVD).

This sequence belongs to the orthopoxvirus OPG001 family. Binds to host CC chemokines, such as RANTES/CCL5, MIP-1alpha/CCL3, MCP-1/CCL2 and eotaxin.

The protein localises to the secreted. Inhibits host immune defense by binding to host chemokines. Binds host CC chemokines (beta chemokines) such as RANTES with high affinity, but not CXC or C chemokines (alpha and gamma chemokines). The chain is Chemokine-binding protein (OPG001) from Variola virus (isolate Human/India/Ind3/1967) (VARV).